Consider the following 278-residue polypeptide: Casein kinase II subunit beta (278 aa).

Disordered stretches follow at residues 1-22 and 78-111; these read MSQE…DSGA and DEEE…RNKS. The residue at position 2 (Ser-2) is an N-acetylserine. Residue Ser-2 is modified to Phosphoserine. The segment covering 78–94 has biased composition (acidic residues); sequence DEEEDEDDVVEEDEVDQ.

The protein belongs to the casein kinase 2 subunit beta family. In terms of assembly, tetramer composed of an alpha subunit, an alpha' subunit, one beta subunit and one beta' subunit. Interacts with FACT subunits POB3 and SPT16. interacts with YTA7. Post-translationally, phosphorylated by alpha subunit.

Its function is as follows. Regulatory subunit of casein kinase II/CK2. As part of the kinase complex regulates the basal catalytic activity of the alpha subunit a constitutively active serine/threonine-protein kinase that phosphorylates a large number of substrates containing acidic residues C-terminal to the phosphorylated serine or threonine. This chain is Casein kinase II subunit beta (CKB1), found in Saccharomyces cerevisiae (strain ATCC 204508 / S288c) (Baker's yeast).